A 579-amino-acid polypeptide reads, in one-letter code: Thiol:disulfide interchange protein DsbD (579 aa).

The signal sequence occupies residues 1 to 16; sequence MKKLFLFFTLIFTAFA. 2 cysteine pairs are disulfide-bonded: C124–C129 and C193–C315. The next 8 membrane-spanning stretches (helical) occupy residues 178 to 198, 230 to 250, 254 to 274, 296 to 316, 337 to 357, 376 to 396, 397 to 417, and 420 to 440; these read IFGF…LPML, LTYT…QIAL, YVMI…FGLF, GAFG…SPCT, AATL…ITLF, FGFV…PEVW, EPRL…LQMS, and GFGY…VQPL. In terms of domain architecture, Thioredoxin spans 449-579; that stretch reads TTTQSAVENM…AFSNWLKALH (131 aa). A disulfide bond links C495 and C498.

Belongs to the thioredoxin family. DsbD subfamily.

It localises to the cell inner membrane. It catalyses the reaction [protein]-dithiol + NAD(+) = [protein]-disulfide + NADH + H(+). It carries out the reaction [protein]-dithiol + NADP(+) = [protein]-disulfide + NADPH + H(+). In terms of biological role, required to facilitate the formation of correct disulfide bonds in some periplasmic proteins and for the assembly of the periplasmic c-type cytochromes. Acts by transferring electrons from cytoplasmic thioredoxin to the periplasm. This transfer involves a cascade of disulfide bond formation and reduction steps. The polypeptide is Thiol:disulfide interchange protein DsbD (Haemophilus influenzae (strain 86-028NP)).